Consider the following 163-residue polypeptide: 3-isopropylmalate dehydratase small subunit (163 aa).

It belongs to the LeuD family. LeuD type 2 subfamily. Heterodimer of LeuC and LeuD.

It carries out the reaction (2R,3S)-3-isopropylmalate = (2S)-2-isopropylmalate. It participates in amino-acid biosynthesis; L-leucine biosynthesis; L-leucine from 3-methyl-2-oxobutanoate: step 2/4. Its function is as follows. Catalyzes the isomerization between 2-isopropylmalate and 3-isopropylmalate, via the formation of 2-isopropylmaleate. This Thermococcus kodakarensis (strain ATCC BAA-918 / JCM 12380 / KOD1) (Pyrococcus kodakaraensis (strain KOD1)) protein is 3-isopropylmalate dehydratase small subunit.